Here is a 969-residue protein sequence, read N- to C-terminus: RNA polymerase-associated protein RapA (969 aa).

One can recognise a Helicase ATP-binding domain in the interval 162-339 (EVGQRVAPRV…FARLALLDAD (178 aa)). Position 175–182 (175–182 (DEVGLGKT)) interacts with ATP. The DEAH box motif lies at 285–288 (DEAH). In terms of domain architecture, Helicase C-terminal spans 492-663 (RIEWLITFLK…IFLKNPQAVG (172 aa)).

Belongs to the SNF2/RAD54 helicase family. RapA subfamily. In terms of assembly, interacts with the RNAP. Has a higher affinity for the core RNAP than for the holoenzyme. Its ATPase activity is stimulated by binding to RNAP.

Its function is as follows. Transcription regulator that activates transcription by stimulating RNA polymerase (RNAP) recycling in case of stress conditions such as supercoiled DNA or high salt concentrations. Probably acts by releasing the RNAP, when it is trapped or immobilized on tightly supercoiled DNA. Does not activate transcription on linear DNA. Probably not involved in DNA repair. In Actinobacillus pleuropneumoniae serotype 3 (strain JL03), this protein is RNA polymerase-associated protein RapA.